A 605-amino-acid polypeptide reads, in one-letter code: Elongation factor 4 (605 aa).

Residues 11–193 (EKIRNFSIIA…QIVEKVPAPT (183 aa)) form the tr-type G domain. GTP contacts are provided by residues 23-28 (DHGKST) and 140-143 (NKID).

The protein belongs to the TRAFAC class translation factor GTPase superfamily. Classic translation factor GTPase family. LepA subfamily.

The protein resides in the cell membrane. The catalysed reaction is GTP + H2O = GDP + phosphate + H(+). Functionally, required for accurate and efficient protein synthesis under certain stress conditions. May act as a fidelity factor of the translation reaction, by catalyzing a one-codon backward translocation of tRNAs on improperly translocated ribosomes. Back-translocation proceeds from a post-translocation (POST) complex to a pre-translocation (PRE) complex, thus giving elongation factor G a second chance to translocate the tRNAs correctly. Binds to ribosomes in a GTP-dependent manner. The sequence is that of Elongation factor 4 from Streptococcus pyogenes serotype M4 (strain MGAS10750).